The primary structure comprises 387 residues: Oleoyl-12-hydroxylase FAH12 (387 aa).

The disordered stretch occupies residues 1–34; it reads MGGGGRMSTVITSNNSEKKGGSSHLKRAPHTKPP. Helical transmembrane passes span 61–81 and 88–108; these read AYDV…FPYI and VAWL…WVIG. Residues 109-113 carry the Histidine box-1 motif; the sequence is HECGH. Residues 121–141 form a helical membrane-spanning segment; sequence LADDIVGLIVHSALLVPYFSW. Positions 145-149 match the Histidine box-2 motif; that stretch reads HRRHH. A run of 3 helical transmembrane segments spans residues 183 to 203, 229 to 249, and 253 to 273; these read VLTL…FNVS, IYIA…ATMA, and AWVM…LVMI. A Histidine box-3 motif is present at residues 319–323; it reads HVAHH.

Belongs to the fatty acid desaturase type 1 family. As to expression, expressed in seeds. Barely detected in leaves.

The protein resides in the microsome membrane. It carries out the reaction a 1-acyl-2-(9Z)-octadecenoyl-sn-glycero-3-phosphocholine + 2 Fe(II)-[cytochrome b5] + O2 + 2 H(+) = a 1-acyl-2-[(R)-12-hydroxyoleoyl]-sn-glycero-3-phosphocholine + 2 Fe(III)-[cytochrome b5] + H2O. Its pathway is lipid metabolism; monounsaturated fatty acid biosynthesis. With respect to regulation, inhibited by oleoyloxyethyl phosphocholine. Its function is as follows. Oleoyl-12-hydroxylase involved in the biosynthesis of ricinoleate (12-hydroxy-cis-9-octadecenoate), the major fatty acid constituent of the oil seeds from castor bean plants. Catalyzes the hydroxylation at the 12-position of 1-acyl-2-oleoyl-sn-glycero-3-phosphocholine (2-oleoyl-PC), which seems to be the actual physiological subtrate. It uses cytochrome b5 as an electron donor. May also be involved in the production of lesquerolic acid (14-hydroxyeicos-cis-ll-enoic acid) in vitro. The chain is Oleoyl-12-hydroxylase FAH12 from Ricinus communis (Castor bean).